Here is a 124-residue protein sequence, read N- to C-terminus: MLLPLKESLESTLANVAKNETLFVAYLASVDPRTKQPWCPTVRAALPLFNNAFNSSKKLNVVHVYVGNMPQWKTPHNEFRVKFGISAVPTLGKYTRDAQGNLKTSLLVDYDCLDANKFSKFIDI.

The 88-residue stretch at 37–124 (PWCPTVRAAL…ANKFSKFIDI (88 aa)) folds into the Thioredoxin domain. The Nucleophile role is filled by Cys-39.

The protein belongs to the thioredoxin family.

The protein localises to the cytoplasm. It is found in the nucleus. The protein is Thioredoxin domain-containing protein C21C3.12c of Schizosaccharomyces pombe (strain 972 / ATCC 24843) (Fission yeast).